We begin with the raw amino-acid sequence, 1529 residues long: uncharacterized protein (1529 aa).

Positions 1-11 are enriched in low complexity; the sequence is MDKNNNNNNSN. Disordered regions lie at residues 1–85, 335–371, 660–694, 798–843, 1016–1035, 1334–1364, and 1454–1497; these read MDKN…SKGV, LLSN…WSSS, LPNL…TATA, NCNI…SSYS, SSLP…NTNN, QQQQ…QLQQ, and QQQV…SRLP. Polar residues predominate over residues 24 to 42; sequence QKRVQNPSFSSGQSRTVPS. The span at 51-79 shows a compositional bias: low complexity; that stretch reads ISSSSSSSSISTTNNTTTTTTSGTGSTSS. Positions 810-833 are enriched in low complexity; the sequence is NNNNNNNNNNNNNNNNNNNNNNNN. 2 stretches are compositionally biased toward polar residues: residues 834–843 and 1016–1027; these read VLPRSNSSYS and SSLPISQNLSDD. Residues 1454–1494 are compositionally biased toward low complexity; sequence QQQVQTPSSPQTLASLLGNSSSNTLTSSSSTLSLNESSTLS.

This is an uncharacterized protein from Dictyostelium discoideum (Social amoeba).